The following is a 194-amino-acid chain: Putative manganese efflux pump MntP (194 aa).

A run of 6 helical transmembrane segments spans residues 6 to 26 (LILVAVALGTDAFSLATGLAL), 35 to 55 (WLFAGTVGLFHIFMPLAGLYL), 66 to 86 (VAAIIGALVLATMGTLMLWEA), 109 to 129 (GVLGGVMAILFMAGSVSLDAL), 142 to 162 (VPLTVLTMGFIAATMTALGLL), and 174 to 194 (RAELAGGLILVAIGLKMLVGV).

The protein belongs to the MntP (TC 9.B.29) family.

It is found in the cell membrane. Probably functions as a manganese efflux pump. The polypeptide is Putative manganese efflux pump MntP (Moorella thermoacetica (strain ATCC 39073 / JCM 9320)).